We begin with the raw amino-acid sequence, 142 residues long: Galactose-6-phosphate isomerase subunit LacA (142 aa).

The protein belongs to the LacAB/RpiB family. Heteromultimeric protein consisting of LacA and LacB.

The enzyme catalyses aldehydo-D-galactose 6-phosphate = keto-D-tagatose 6-phosphate. It functions in the pathway carbohydrate metabolism; D-galactose 6-phosphate degradation; D-tagatose 6-phosphate from D-galactose 6-phosphate: step 1/1. The sequence is that of Galactose-6-phosphate isomerase subunit LacA from Staphylococcus aureus.